Reading from the N-terminus, the 314-residue chain is tRNA-cytidine(32) 2-sulfurtransferase (314 aa).

The PP-loop motif motif lies at 57–62 (SGGKDS). 3 residues coordinate [4Fe-4S] cluster: cysteine 132, cysteine 135, and cysteine 223.

Belongs to the TtcA family. In terms of assembly, homodimer. Requires Mg(2+) as cofactor. The cofactor is [4Fe-4S] cluster.

Its subcellular location is the cytoplasm. The enzyme catalyses cytidine(32) in tRNA + S-sulfanyl-L-cysteinyl-[cysteine desulfurase] + AH2 + ATP = 2-thiocytidine(32) in tRNA + L-cysteinyl-[cysteine desulfurase] + A + AMP + diphosphate + H(+). Its pathway is tRNA modification. In terms of biological role, catalyzes the ATP-dependent 2-thiolation of cytidine in position 32 of tRNA, to form 2-thiocytidine (s(2)C32). The sulfur atoms are provided by the cysteine/cysteine desulfurase (IscS) system. The polypeptide is tRNA-cytidine(32) 2-sulfurtransferase (Alkalilimnicola ehrlichii (strain ATCC BAA-1101 / DSM 17681 / MLHE-1)).